A 316-amino-acid polypeptide reads, in one-letter code: Insulin-like growth factor-binding protein 2 (316 aa).

The N-terminal stretch at 1–29 is a signal peptide; the sequence is MLPRLGGTALSLLPLLLLLLGTGGRGARA. The IGFBP N-terminal domain occupies 31-126; that stretch reads VLFRCPPCTP…VLGEGTCEKR (96 aa). Disulfide bonds link Cys35–Cys76, Cys38–Cys78, Cys46–Cys79, Cys68–Cys82, Cys90–Cys103, and Cys97–Cys123. The segment at 189-217 is disordered; it reads QHRQMGKGGKHHLGLEEPKKLRPPPARTP. A Thyroglobulin type-1 domain is found at 215 to 297; sequence RTPCQQELDQ…APTIRGDPEC (83 aa). Cystine bridges form between Cys218–Cys252, Cys263–Cys274, and Cys276–Cys297. The Cell attachment site signature appears at 292–294; sequence RGD.

As to quaternary structure, interacts with IGF1. Interacts with IGF2. Interacts (via RGD motif) with integrin alpha5/ITGA5; this interaction induces cell migration, adhesion or apoptosis according to the context. Interacts with PTPRB; this interaction leads to PTPRB dimerization and inactivation. Post-translationally, cleaved by MMP9 leading to release of free IGF2 from IGFBP2-IGF2 complex, which contributes to enhance the motility and the growth of astrocytes. In terms of processing, O-glycosylated.

It localises to the secreted. Its function is as follows. May have both growth-inhibiting and growth-promoting effects, depending on tissue type; increases IGF-induced DNA synthesis in the uterine epithelium. IGF-binding proteins prolong the half-life of the IGFs and have been shown to either inhibit or stimulate the growth promoting effects of the IGFs on cell culture. They alter the interaction of IGFs with their cell surface receptors. Multifunctional protein that plays a critical role in regulating the availability of IGFs such as IGF1 and IGF2 to their receptors and thereby regulates IGF-mediated cellular processes including proliferation, differentiation, and apoptosis in a cell-type specific manner. Functions coordinately with receptor protein tyrosine phosphatase beta/PTPRB and the IGF1 receptor to regulate IGF1-mediated signaling by stimulating the phosphorylation of PTEN leading to its inactivation and AKT1 activation. Plays a positive role in cell migration via interaction with integrin alpha5/ITGA5 through an RGD motif. Additionally, interaction with ITGA5/ITGB1 enhances the adhesion of endothelial progenitor cells to endothelial cells. Upon mitochondrial damage, facilitates apoptosis with ITGA5 of podocytes, and then activates the phosphorylation of focal adhesion kinase (FAK)-mediated mitochondrial injury. The polypeptide is Insulin-like growth factor-binding protein 2 (IGFBP2) (Sus scrofa (Pig)).